Reading from the N-terminus, the 247-residue chain is Carboxy-S-adenosyl-L-methionine synthase (247 aa).

Residues tyrosine 39, glycine 64–serine 66, aspartate 89–asparagine 90, aspartate 117–isoleucine 118, asparagine 132, and arginine 199 each bind S-adenosyl-L-methionine.

Belongs to the class I-like SAM-binding methyltransferase superfamily. Cx-SAM synthase family. In terms of assembly, homodimer.

It catalyses the reaction prephenate + S-adenosyl-L-methionine = carboxy-S-adenosyl-L-methionine + 3-phenylpyruvate + H2O. Functionally, catalyzes the conversion of S-adenosyl-L-methionine (SAM) to carboxy-S-adenosyl-L-methionine (Cx-SAM). The chain is Carboxy-S-adenosyl-L-methionine synthase from Klebsiella pneumoniae (strain 342).